The following is a 404-amino-acid chain: CD209 antigen (404 aa).

Over 1–37 the chain is Cytoplasmic; sequence MSDSKEPRLQQLDLLEEEQLGGVGFRQTRGYKSLAGC. 3 consecutive short sequence motifs (endocytosis signal) follow at residues 14–15, 16–18, and 31–34; these read LL, EEE, and YKSL. The helical; Signal-anchor for type II membrane protein transmembrane segment at 38–58 threads the bilayer; it reads LGHGPLVLQLLSFTLLAGLLV. Over 59 to 404 the chain is Extracellular; the sequence is QVSKVPSSLS…APTTPNPPPA (346 aa). Residue Asn-80 is glycosylated (N-linked (GlcNAc...) asparagine). Tandem repeats lie at residues 96 to 118, 119 to 141, 142 to 164, 165 to 187, 188 to 210, 211 to 233, and 234 to 257. The tract at residues 96-257 is 7 X approximate tandem repeats; that stretch reads KQQEIYQELT…AVERLCHPCP (162 aa). 3 disulfides stabilise this stretch: Cys-256–Cys-267, Cys-284–Cys-377, and Cys-356–Cys-369. A C-type lectin domain is found at 263–378; sequence FQGNCYFMSN…CNLAKFWICK (116 aa). Residues Glu-347, Asn-349, Ile-351, Glu-354, Asn-365, and Asp-366 each contribute to the Ca(2+) site. The disordered stretch occupies residues 382 to 404; that stretch reads ASCSGDEERLLSPAPTTPNPPPA.

Homotetramer. Interacts with C1QBP; the interaction is indicative for a C1q:C1QBP:CD209 signaling complex. Interacts with ICAM2 and ICAM3 by binding to mannose-like carbohydrates. Interacts (via C-type lectin domain) with CEACAM1 (via Lewis X moieties); this interaction is regulated by the glycosylation pattern of CEACAM1 on cell types and regulates contact between dendritic cells and neutrophils.

It is found in the membrane. Its function is as follows. Pathogen-recognition receptor expressed on the surface of immature dendritic cells (DCs) and involved in initiation of primary immune response. Thought to mediate the endocytosis of pathogens which are subsequently degraded in lysosomal compartments. The receptor returns to the cell membrane surface and the pathogen-derived antigens are presented to resting T-cells via MHC class II proteins to initiate the adaptive immune response. Probably recognizes in a calcium-dependent manner high mannose N-linked oligosaccharides in a variety of pathogen antigens. In terms of biological role, on DCs it is a high affinity receptor for ICAM2 and ICAM3 by binding to mannose-like carbohydrates. May act as a DC rolling receptor that mediates transendothelial migration of DC presursors from blood to tissues by binding endothelial ICAM2. Seems to regulate DC-induced T-cell proliferation by binding to ICAM3 on T-cells in the immunological synapse formed between DC and T-cells. The sequence is that of CD209 antigen (CD209) from Macaca mulatta (Rhesus macaque).